The primary structure comprises 1306 residues: Receptor-type tyrosine-protein phosphatase C (1306 aa).

The signal sequence occupies residues 1-25; it reads MTMYLWLKLLAFGFAFLDTEVFVTG. The Extracellular portion of the chain corresponds to 26-577; it reads QSPTPSPTGL…LHHSTSYNSK (552 aa). Residues 28–163 form a disordered region; sequence PTPSPTGLTT…TASTFPTDPV (136 aa). 2 stretches are compositionally biased toward polar residues: residues 52 to 61 and 70 to 131; these read THTTAFSPAS and SETT…SGSA. Residues N80, N92, N97, N186, N192, N199, N234, N262, N272, and N278 are each glycosylated (N-linked (GlcNAc...) asparagine). An N-linked (GlcNAc...) asparagine; atypical glycan is attached at N286. N337, N380, N421, N470, N490, and N531 each carry an N-linked (GlcNAc...) asparagine glycan. Fibronectin type-III domains lie at 391-483 and 484-576; these read SPGE…TKSA and PPSQ…SYNS. The helical transmembrane segment at 578 to 598 threads the bilayer; that stretch reads ALIAFLAFLIIVTSIALLVVL. At 599 to 1306 the chain is on the cytoplasmic side; that stretch reads YKIYDLHKKR…PASPALNQGS (708 aa). Tyrosine-protein phosphatase domains are found at residues 653 to 912 and 944 to 1228; these read FLAE…LVEY and LEAE…IAST. Y683 carries the phosphotyrosine modification. Substrate is bound by residues D821, 853–859, and Q897; that span reads CSAGVGR. The active-site Phosphocysteine intermediate is the C853. 7 positions are modified to phosphoserine: S975, S994, S997, S1001, S1004, S1005, and S1009. A disordered region spans residues 993–1014; it reads MSKESEHDSDESSDDDSDSEEP. The segment covering 999-1012 has biased composition (acidic residues); the sequence is HDSDESSDDDSDSE. C1169 functions as the Phosphocysteine intermediate in the catalytic mechanism. Residues 1261 to 1306 form a disordered region; that stretch reads CVNPLGAPEKLPEAKEQAEGSEPTSGTEGPEHSVNGPASPALNQGS. S1299 is modified (phosphoserine).

Belongs to the protein-tyrosine phosphatase family. Receptor class 1/6 subfamily. Binds GANAB and PRKCSH. Interacts with SKAP1. Interacts with DPP4; the interaction is enhanced in an interleukin-12-dependent manner in activated lymphocytes. Interacts with CD53; this interaction stabilizes PTPRC on the membrane and is required for optimal phosphatase activity. In terms of assembly, interacts with CLEC10A. As to quaternary structure, does not interact with CLEC10A. (Microbial infection) Interacts with human cytomegalovirus protein UL11; the interaction is required for binding of UL11 to T-cells. In terms of processing, heavily N- and O-glycosylated. As to expression, isoform 1: Detected in thymocytes. Isoform 2: Detected in thymocytes. Isoform 3: Detected in thymocytes. Isoform 4: Not detected in thymocytes. Isoform 5: Detected in thymocytes. Isoform 6: Not detected in thymocytes. Isoform 7: Detected in thymocytes. Isoform 8: Not detected in thymocytes.

It is found in the cell membrane. Its subcellular location is the membrane raft. The protein resides in the synapse. The catalysed reaction is O-phospho-L-tyrosyl-[protein] + H2O = L-tyrosyl-[protein] + phosphate. In terms of biological role, protein tyrosine-protein phosphatase required for T-cell activation through the antigen receptor. Acts as a positive regulator of T-cell coactivation upon binding to DPP4. The first PTPase domain has enzymatic activity, while the second one seems to affect the substrate specificity of the first one. Upon T-cell activation, recruits and dephosphorylates SKAP1 and FYN. Dephosphorylates LYN, and thereby modulates LYN activity. Interacts with CLEC10A at antigen presenting cell-T cell contact; CLEC10A on immature dendritic cells recognizes Tn antigen-carrying PTPRC/CD45 receptor on effector T cells and modulates T cell activation threshold to limit autoreactivity. Its function is as follows. (Microbial infection) Acts as a receptor for human cytomegalovirus protein UL11 and mediates binding of UL11 to T-cells, leading to reduced induction of tyrosine phosphorylation of multiple signaling proteins upon T-cell receptor stimulation and impaired T-cell proliferation. In Homo sapiens (Human), this protein is Receptor-type tyrosine-protein phosphatase C.